The primary structure comprises 460 residues: ATP synthase subunit beta (460 aa).

150 to 157 (GGAGVGKT) is an ATP binding site.

Belongs to the ATPase alpha/beta chains family. In terms of assembly, F-type ATPases have 2 components, CF(1) - the catalytic core - and CF(0) - the membrane proton channel. CF(1) has five subunits: alpha(3), beta(3), gamma(1), delta(1), epsilon(1). CF(0) has three main subunits: a(1), b(2) and c(9-12). The alpha and beta chains form an alternating ring which encloses part of the gamma chain. CF(1) is attached to CF(0) by a central stalk formed by the gamma and epsilon chains, while a peripheral stalk is formed by the delta and b chains.

The protein resides in the cell inner membrane. The catalysed reaction is ATP + H2O + 4 H(+)(in) = ADP + phosphate + 5 H(+)(out). Produces ATP from ADP in the presence of a proton gradient across the membrane. The catalytic sites are hosted primarily by the beta subunits. This is ATP synthase subunit beta from Edwardsiella ictaluri (strain 93-146).